The sequence spans 45 residues: DNA replication protein repEB (45 aa).

Its function is as follows. Involved in T4 DNA replication. Important for the priming of leading strand DNA synthesis at oriE. Binds to ssDNA. This Enterobacteria phage T4 (Bacteriophage T4) protein is DNA replication protein repEB (repEB).